We begin with the raw amino-acid sequence, 93 residues long: MTDSEHVGKTCQIDVLIEEHDERTRAKARLSWAGRQMVGVGLARLDPADEPVAQIGDELAIARALSDLANQLFALTSSDIEASTHQPVTGLHH.

It to M.tuberculosis Rv1738.

This is an uncharacterized protein from Mycobacterium tuberculosis (strain CDC 1551 / Oshkosh).